A 439-amino-acid polypeptide reads, in one-letter code: MSAKVASNKEAPLTEDSVSDLSSDGVEAEGVDQTENSGADAMIDSEPATEAGVMKQAFGFIKNHLKVGADMTKLPIPATFVQPISFLTAIQQQSAIFSHLLTSAPYIKEDDQRFLQVLKYHLTWPKMYFPKNPLNPILGEVYECQVQHTDEKTNEVIQGDITHFTAEQISHHPPISCFNFYNDKHKIKFDSKQQITPVFKGKCIRVNMDVKTCITLEREGGVTETYFNDKFTEGYLRLLRWKFEFTGKYNFVCPETGYSAVINFKDKPIIGGKWHDLQIIVSKGTEPIYDIHGTHVDILTITNLKDKTSGVFINYNTMRSEPVIEEPMEQLKENASQKVWKGVAEGFAKKDSRKAGLEKQRIEDLQRKKAKVNLAKDPNFIHKPHYFIHNPNLPADCVKPDYIFKKPVESSTPNLSKVDSSAKIENSIPVDNSIPQTTN.

Disordered stretches follow at residues 1 to 40 (MSAK…SGAD) and 409 to 439 (ESST…QTTN). Polar residues-rich tracts occupy residues 409–419 (ESSTPNLSKVD) and 429–439 (PVDNSIPQTTN).

The protein belongs to the OSBP family.

The polypeptide is Oxysterol-binding protein 6 (osbF) (Dictyostelium discoideum (Social amoeba)).